We begin with the raw amino-acid sequence, 302 residues long: Polyadenylate-binding protein 2 (302 aa).

The span at 1-12 shows a compositional bias: low complexity; it reads MAAAAAAAAAAG. Positions 1–111 are disordered; the sequence is MAAAAAAAAA…EADPGDGAIE (111 aa). The residue at position 2 (Ala-2) is an N-acetylalanine. An interaction with SKIP region spans residues 2 to 141; the sequence is AAAAAAAAAA…LKELQNEVEK (140 aa). Arg-17 is subject to Omega-N-methylarginine. A Phosphoserine modification is found at Ser-19. A compositionally biased stretch (gly residues) spans 30–47; the sequence is GAGGEAGEGDPGGAGDYG. The span at 51–68 shows a compositional bias: acidic residues; it reads ESEELEPGELLPEPEPEE. Position 52 is a phosphoserine (Ser-52). The segment covering 73–83 has biased composition (pro residues); it reads PRAPPGAPGPG. Ser-91 is subject to Phosphoserine. A coiled-coil region spans residues 111-147; sequence EDPELEAIKARVREMEEEAEKLKELQNEVEKQMNMSP. Positions 115 to 143 are stimulates PAPOLA; that stretch reads LEAIKARVREMEEEAEKLKELQNEVEKQM. Residues Ser-146 and Ser-231 each carry the phosphoserine modification. Residues 168–245 form the RRM domain; the sequence is RSIYVGNVDY…RQIKVIPKRT (78 aa). Arg-234, Arg-255, and Arg-259 each carry asymmetric dimethylarginine; alternate. Omega-N-methylarginine; alternate is present on residues Arg-234, Arg-255, and Arg-259. The segment at 255–302 is strong poly(A) affinity and self-association; the sequence is RGFPRSRYRARTTNYNSSRSRFYSGFNSRPRGRIYRGRARATSWYSPY. 11 positions are modified to asymmetric dimethylarginine: Arg-261, Arg-263, Arg-265, Arg-273, Arg-275, Arg-283, Arg-285, Arg-287, Arg-290, Arg-292, and Arg-294. The tract at residues 282 to 302 is interaction with PAPOLA; the sequence is SRPRGRIYRGRARATSWYSPY.

As to quaternary structure, monomer and homooligomer. Identified in a IGF2BP1-dependent mRNP granule complex containing untranslated mRNAs. Binds RNA as a monomer and oligomerizes when bound to poly(A). Interacts with PAPOLA, but only in presence of oligo(A) RNA. Interacts with NUDT21/CPSF5 and transportin. Associates in a ternary complex with CPSF4 and NS/NS1 and interaction with NS/NS1, blocks nuclear export of host cell mRNAs. Associates in a single complex with SKIP and MYOD1 and interacts with SKIP in differentiated myocytes. May interact with SETX. Interacts (via RRM domain and C-terminal arginine-rich region) with ZFP36 (via hypophosphorylated form); this interaction occurs in the nucleus in a RNA-independent manner, decreases in presence of single-stranded poly(A) RNA-oligomer and in a p38-dependent-manner and may down-regulated RNA poly(A) polymerase activity. Component of the poly(A) tail exosome targeting (PAXT) complex composed of PABPN1, ZFC3H1 and MTREX. Interacts with ZFC3H1 in a RNase-insensitive manner. Interacts with FRG1. Interacts with ZC3H11A. Post-translationally, arginine dimethylation is asymmetric and involves PRMT1 and PRMT3. It does not influence the RNA binding properties. Ubiquitous.

Its subcellular location is the cytoplasm. The protein localises to the nucleus. It localises to the nucleus speckle. In terms of biological role, involved in the 3'-end formation of mRNA precursors (pre-mRNA) by the addition of a poly(A) tail of 200-250 nt to the upstream cleavage product. Stimulates poly(A) polymerase (PAPOLA) conferring processivity on the poly(A) tail elongation reaction and also controls the poly(A) tail length. Increases the affinity of poly(A) polymerase for RNA. Is also present at various stages of mRNA metabolism including nucleocytoplasmic trafficking and nonsense-mediated decay (NMD) of mRNA. Cooperates with SKIP to synergistically activate E-box-mediated transcription through MYOD1 and may regulate the expression of muscle-specific genes. Binds to poly(A) and to poly(G) with high affinity. May protect the poly(A) tail from degradation. Subunit of the trimeric poly(A) tail exosome targeting (PAXT) complex, a complex that directs a subset of long and polyadenylated poly(A) RNAs for exosomal degradation. The RNA exosome is fundamental for the degradation of RNA in eukaryotic nuclei. Substrate targeting is facilitated by its cofactor MTREX, which links to RNA-binding protein adapters. This chain is Polyadenylate-binding protein 2 (Pabpn1), found in Mus musculus (Mouse).